The primary structure comprises 272 residues: METYAVFGNPIAHSKSPFIHQQFAQQLNIEHPYGRVLAPINDFINTLNAFFSAGGKGANVTVPFKEEAFARADELTERAALAGAVNTLMRLEDGRLLGDNTDGVGLLSDLERLSFIRPGLRILLIGAGGASRGVLLPLLSLDCAVTITNRTVSRAEELAKLFAHTGSIQALSMDELEGHEFDLIINATSSGISGDIPAIPSSLIHPGIYCYDMFYQKGKTPFLAWCEQRGSKRNADGLGMLVAQAAHAFLLWHGVLPDVEPVIKQLQEELSA.

Residues 14 to 16 and T61 each bind shikimate; that span reads SKS. The Proton acceptor role is filled by K65. NADP(+) is bound at residue E77. Residues N86 and D102 each contribute to the shikimate site. Residues 126 to 130, 149 to 154, and M213 each bind NADP(+); these read GAGGA and NRTVSR. Position 215 (Y215) interacts with shikimate. NADP(+) is bound at residue G237.

Belongs to the shikimate dehydrogenase family. Homodimer.

It catalyses the reaction shikimate + NADP(+) = 3-dehydroshikimate + NADPH + H(+). Its pathway is metabolic intermediate biosynthesis; chorismate biosynthesis; chorismate from D-erythrose 4-phosphate and phosphoenolpyruvate: step 4/7. In terms of biological role, involved in the biosynthesis of the chorismate, which leads to the biosynthesis of aromatic amino acids. Catalyzes the reversible NADPH linked reduction of 3-dehydroshikimate (DHSA) to yield shikimate (SA). The polypeptide is Shikimate dehydrogenase (NADP(+)) (Escherichia coli (strain K12 / MC4100 / BW2952)).